We begin with the raw amino-acid sequence, 118 residues long: UPF0102 protein STH1475 (118 aa).

The protein belongs to the UPF0102 family.

The sequence is that of UPF0102 protein STH1475 from Symbiobacterium thermophilum (strain DSM 24528 / JCM 14929 / IAM 14863 / T).